The sequence spans 288 residues: Putative movement protein (288 aa).

Residues 207–288 (TGPRATLSQP…TSSRSRRVRG (82 aa)) are disordered.

Transports viral genome to neighboring plant cells directly through plasmosdesmata, without any budding. The movement protein allows efficient cell to cell propagation, by bypassing the host cell wall barrier (Potential). The polypeptide is Putative movement protein (Cucumis melo (Muskmelon)).